Reading from the N-terminus, the 814-residue chain is Rap guanine nucleotide exchange factor 5 (814 aa).

The DEP domain maps to 43-118 (LQAADLVKDR…DNYVFYQFSS (76 aa)). The N-terminal Ras-GEF domain occupies 301–434 (ARYVVVSGTP…ELKEFQKILG (134 aa)). Residues 578–813 (NTWDLALELM…FELSHRLEPR (236 aa)) enclose the Ras-GEF domain.

The protein resides in the nucleus. Its function is as follows. Guanine nucleotide exchange factor (GEF) for RAP1A, RAP2A and MRAS/M-Ras-GTP. Its association with MRAS inhibits Rap1 activation. In Mus musculus (Mouse), this protein is Rap guanine nucleotide exchange factor 5 (Rapgef5).